The following is a 285-amino-acid chain: ATP synthase gamma chain (285 aa).

Belongs to the ATPase gamma chain family. F-type ATPases have 2 components, CF(1) - the catalytic core - and CF(0) - the membrane proton channel. CF(1) has five subunits: alpha(3), beta(3), gamma(1), delta(1), epsilon(1). CF(0) has three main subunits: a, b and c.

It localises to the cell membrane. Produces ATP from ADP in the presence of a proton gradient across the membrane. The gamma chain is believed to be important in regulating ATPase activity and the flow of protons through the CF(0) complex. The sequence is that of ATP synthase gamma chain from Exiguobacterium sp. (strain ATCC BAA-1283 / AT1b).